A 241-amino-acid polypeptide reads, in one-letter code: Large ribosomal subunit protein uL1 (241 aa).

The protein belongs to the universal ribosomal protein uL1 family. As to quaternary structure, part of the 50S ribosomal subunit.

Functionally, binds directly to 23S rRNA. The L1 stalk is quite mobile in the ribosome, and is involved in E site tRNA release. In terms of biological role, protein L1 is also a translational repressor protein, it controls the translation of the L11 operon by binding to its mRNA. The protein is Large ribosomal subunit protein uL1 of Thermomicrobium roseum (strain ATCC 27502 / DSM 5159 / P-2).